The chain runs to 395 residues: MQSPAVLRTSRQVQNAHTGLDLSVPQHQEVRGKMMSGHVEYQILVVTRLAVFKSAKHRPEDVVQFLVSKKYSEIEEFYQKLYSCYPAASLPPLPRKVLFVGESDIRERRAMFDEILRCVSKDAQLAGSPELLEFLGTRAPGATGLATRDPSVLDDTASQPGDSDEAFDFFEQQDEVQPPTLGLSSKDVEKSLVGEEEEEEEEEEVLDPLGIMRSKKPKKRPEVAVRPKPAPRLTIFDEEVDPDAGLFSSDKKVSETRRPLETTQDSLKLFDDPDLGGAVSLGDPLLLPAASESRGPTSRPEHGDASKELFRVEEDLDLILNLGSEPKPKPQTKPKPLVPAKPALPRKPTLPASVGPSEPGSGPQKQQQIQAMDEMDILQYIRDHDTLAQDSPSLF.

Residue methionine 1 is modified to N-acetylmethionine. A Phosphoserine modification is found at serine 3. Residues 19 to 142 enclose the PX domain; sequence GLDLSVPQHQ…EFLGTRAPGA (124 aa). Disordered stretches follow at residues 143-310 and 322-374; these read TGLA…KELF and LGSE…AMDE. A compositionally biased stretch (acidic residues) spans 162 to 174; it reads DSDEAFDFFEQQD. Serine 191 bears the Phosphoserine mark. Over residues 194–206 the composition is skewed to acidic residues; it reads GEEEEEEEEEEVL. Basic and acidic residues-rich tracts occupy residues 249 to 260 and 299 to 310; these read SDKKVSETRRPL and RPEHGDASKELF. Serine 254 is subject to Phosphoserine. Residues 329-339 show a composition bias toward pro residues; sequence KPQTKPKPLVP. An N6-acetyllysine modification is found at lysine 341.

As to quaternary structure, binds HCLS1. Interacts with the SH3 domain of HCLS1 in vitro. As to expression, ubiquitously expressed.

May be a modulator of IL-2 signaling. This chain is HCLS1-binding protein 3 (Hs1bp3), found in Mus musculus (Mouse).